The chain runs to 447 residues: Phosphoglucosamine mutase (447 aa).

Serine 104 serves as the catalytic Phosphoserine intermediate. Mg(2+) contacts are provided by serine 104, aspartate 243, aspartate 245, and aspartate 247. At serine 104 the chain carries Phosphoserine.

It belongs to the phosphohexose mutase family. The cofactor is Mg(2+). In terms of processing, activated by phosphorylation.

The enzyme catalyses alpha-D-glucosamine 1-phosphate = D-glucosamine 6-phosphate. Catalyzes the conversion of glucosamine-6-phosphate to glucosamine-1-phosphate. The sequence is that of Phosphoglucosamine mutase from Corynebacterium glutamicum (strain ATCC 13032 / DSM 20300 / JCM 1318 / BCRC 11384 / CCUG 27702 / LMG 3730 / NBRC 12168 / NCIMB 10025 / NRRL B-2784 / 534).